Reading from the N-terminus, the 303-residue chain is Bifunctional protein FolD (303 aa).

NADP(+)-binding positions include 165–167, S190, and I231; that span reads GRS.

Belongs to the tetrahydrofolate dehydrogenase/cyclohydrolase family. In terms of assembly, homodimer.

It carries out the reaction (6R)-5,10-methylene-5,6,7,8-tetrahydrofolate + NADP(+) = (6R)-5,10-methenyltetrahydrofolate + NADPH. The catalysed reaction is (6R)-5,10-methenyltetrahydrofolate + H2O = (6R)-10-formyltetrahydrofolate + H(+). The protein operates within one-carbon metabolism; tetrahydrofolate interconversion. Catalyzes the oxidation of 5,10-methylenetetrahydrofolate to 5,10-methenyltetrahydrofolate and then the hydrolysis of 5,10-methenyltetrahydrofolate to 10-formyltetrahydrofolate. The chain is Bifunctional protein FolD from Prochlorococcus marinus (strain NATL2A).